We begin with the raw amino-acid sequence, 159 residues long: MDFRIGQGYDVHALVPGRPLIIGGVTIPYERGLLGHSDADVLLHAITDALFGAAAMGDIGRHFSDTDAKFAGADSRVLLRECFARVTAAGFSIANVDSSVVAQAPKLAPHIEGMRANIAADLGLPVERVNVKAKTNEKLGYLGRGEGIEAQAAVLLIRN.

A divalent metal cation is bound by residues aspartate 10 and histidine 12. Residues 10 to 12 (DVH) and 36 to 37 (HS) each bind 4-CDP-2-C-methyl-D-erythritol 2-phosphate. Residue histidine 44 participates in a divalent metal cation binding. 4-CDP-2-C-methyl-D-erythritol 2-phosphate contacts are provided by residues 58-60 (DIG), 63-67 (FSDTD), and arginine 144.

The protein belongs to the IspF family. In terms of assembly, homotrimer. The cofactor is a divalent metal cation.

It catalyses the reaction 4-CDP-2-C-methyl-D-erythritol 2-phosphate = 2-C-methyl-D-erythritol 2,4-cyclic diphosphate + CMP. It functions in the pathway isoprenoid biosynthesis; isopentenyl diphosphate biosynthesis via DXP pathway; isopentenyl diphosphate from 1-deoxy-D-xylulose 5-phosphate: step 4/6. Involved in the biosynthesis of isopentenyl diphosphate (IPP) and dimethylallyl diphosphate (DMAPP), two major building blocks of isoprenoid compounds. Catalyzes the conversion of 4-diphosphocytidyl-2-C-methyl-D-erythritol 2-phosphate (CDP-ME2P) to 2-C-methyl-D-erythritol 2,4-cyclodiphosphate (ME-CPP) with a corresponding release of cytidine 5-monophosphate (CMP). The sequence is that of 2-C-methyl-D-erythritol 2,4-cyclodiphosphate synthase from Paraburkholderia xenovorans (strain LB400).